The following is a 173-amino-acid chain: Myosin light chain 5 (173 aa).

Residues Met-1–Asn-22 form a disordered region. EF-hand domains follow at residues Thr-30–Thr-65, Asp-100–Lys-135, and Met-136–Lys-171. Ca(2+) is bound by residues Asp-43, Asn-45, Asp-47, and Asp-54.

Myosin is a hexamer of 2 heavy chains and 4 light chains. Jaw-closing muscles.

The protein is Myosin light chain 5 (MYL5) of Felis catus (Cat).